A 712-amino-acid polypeptide reads, in one-letter code: Exocyst complex component EXO70I (712 aa).

The first 18 residues, 1–18 (MHKKQLMALLMVPQTSDS), serve as a signal peptide directing secretion. Positions 26-53 (LESAYSDLESLLRSSKQMEQNIETMETR) form a coiled coil. N111 carries N-linked (GlcNAc...) asparagine glycosylation.

Belongs to the EXO70 family. In terms of assembly, subunit of the exocyst complex that mediates vesicle tethering during exocytosis. Interacts with VPY at the periarbuscular membrane (PAM) around the arbuscule hyphal tips. As to expression, present at low levels in non-mycorrhizal root tips.

The protein localises to the cell membrane. Functionally, component of an exocyst subcomplex specifically required for periarbuscular membrane (PAM) biogenesis during arbuscular mycorrhizal (AM) symbiosis with AM fungi (e.g. Glomus versiforme), especially critical during the early branching phase of arbuscule development; probably involved in STR and STR2 delivery into the PAM. This is Exocyst complex component EXO70I from Medicago truncatula (Barrel medic).